The sequence spans 206 residues: Putative 3-methyladenine DNA glycosylase (206 aa).

Belongs to the DNA glycosylase MPG family.

The chain is Putative 3-methyladenine DNA glycosylase from Salinibacter ruber (strain DSM 13855 / M31).